Here is a 263-residue protein sequence, read N- to C-terminus: Superoxide dismutase [Fe] 3, chloroplastic (263 aa).

A chloroplast-targeting transit peptide spans 1 to 41 (MSSCVVTTSCFYTISDSSIRLKSPKLLNLSNQQRRRSLRSR). Fe cation is bound by residues H74, H127, D211, and H215.

It belongs to the iron/manganese superoxide dismutase family. As to quaternary structure, homodimer. Heterodimer with FSD2. Interacts with MRL7. Requires Fe cation as cofactor.

It localises to the plastid. The protein resides in the chloroplast thylakoid. The catalysed reaction is 2 superoxide + 2 H(+) = H2O2 + O2. Activated by cpn20/cpn21 (in vitro). In terms of biological role, destroys superoxide anion radicals which are normally produced within the cells and which are toxic to biological systems. Plays important role in chloroplast development, particularly in the maintenance of thylakoids membranes. Seems to act as a heterodimer with FSD2. The protein is Superoxide dismutase [Fe] 3, chloroplastic of Arabidopsis thaliana (Mouse-ear cress).